Consider the following 1134-residue polypeptide: Centrosomal protein of 131 kDa (1134 aa).

Disordered regions lie at residues 111 to 131 (NSSE…EEGE), 168 to 208 (DLPG…PLTL), 286 to 306 (ESSK…APSS), 425 to 455 (VGKK…TINP), and 492 to 528 (DQKQ…EDSR). Residues 180-196 (MHADLDSSDCDNDKQEV) are compositionally biased toward basic and acidic residues. The span at 494-504 (KQYDGKHKPGL) shows a compositional bias: basic and acidic residues. Polar residues predominate over residues 513 to 522 (NDTASQLSLK). Positions 732-1131 (LESQNQAWEH…AVIRQQRKDY (400 aa)) form a coiled coil.

Belongs to the CEP131 family. In terms of tissue distribution, expressed in chordotonal (Ch) neuronal precursors. Expressed in ciliated cells, like sensory neurons and spermatids.

Its subcellular location is the cytoplasm. It localises to the cytoskeleton. The protein localises to the microtubule organizing center. It is found in the centrosome. The protein resides in the cilium basal body. Its subcellular location is the centriole. In terms of biological role, cilium-specific protein with a role in cilium/flagellum formation. May be involved in transport of components into the growing cilium. In germ cells and sensory neurons, plays a role with Cby in the building of the transition zone necessary for the formation of the ciliary cap and for the correct elongation of the axoneme. In Drosophila melanogaster (Fruit fly), this protein is Centrosomal protein of 131 kDa.